The primary structure comprises 655 residues: Ubiquilin-3 (655 aa).

Residues I22–M98 form the Ubiquitin-like domain. Residues C102 to Y124 are disordered. Residues Q110–S122 are compositionally biased toward low complexity. Residues N194–M233 enclose the STI1 domain. Disordered stretches follow at residues P277–R330, A364–E399, and F412–G447. Residues A279–T290 show a composition bias toward low complexity. The span at G318–R330 shows a compositional bias: basic and acidic residues. A compositionally biased stretch (low complexity) spans V377–P395. Residues K432–L441 are compositionally biased toward polar residues. In terms of domain architecture, UBA spans Q609 to S655.

As to expression, testis specific.

In Homo sapiens (Human), this protein is Ubiquilin-3 (UBQLN3).